The following is a 471-amino-acid chain: tRNA(Ile)-lysidine synthase (471 aa).

35–40 (SGGADS) is an ATP binding site.

The protein belongs to the tRNA(Ile)-lysidine synthase family.

It is found in the cytoplasm. It catalyses the reaction cytidine(34) in tRNA(Ile2) + L-lysine + ATP = lysidine(34) in tRNA(Ile2) + AMP + diphosphate + H(+). In terms of biological role, ligates lysine onto the cytidine present at position 34 of the AUA codon-specific tRNA(Ile) that contains the anticodon CAU, in an ATP-dependent manner. Cytidine is converted to lysidine, thus changing the amino acid specificity of the tRNA from methionine to isoleucine. The protein is tRNA(Ile)-lysidine synthase of Geobacter sulfurreducens (strain ATCC 51573 / DSM 12127 / PCA).